The primary structure comprises 432 residues: Glutamate-1-semialdehyde 2,1-aminomutase (432 aa).

K271 bears the N6-(pyridoxal phosphate)lysine mark.

This sequence belongs to the class-III pyridoxal-phosphate-dependent aminotransferase family. HemL subfamily. In terms of assembly, homodimer. Pyridoxal 5'-phosphate serves as cofactor.

The protein localises to the cytoplasm. It catalyses the reaction (S)-4-amino-5-oxopentanoate = 5-aminolevulinate. It participates in porphyrin-containing compound metabolism; protoporphyrin-IX biosynthesis; 5-aminolevulinate from L-glutamyl-tRNA(Glu): step 2/2. Its pathway is porphyrin-containing compound metabolism; chlorophyll biosynthesis. This chain is Glutamate-1-semialdehyde 2,1-aminomutase, found in Prochlorococcus marinus (strain MIT 9211).